Reading from the N-terminus, the 259-residue chain is MSETGQRESVRPSPIFLGLLGLTAVGGALAWLAGETVQPLAYAGVFVMVIAGWLVSLCLHEFGHAFTAWRFGDHDVAVRGYLTLDPRRYSHPMLSLGLPMLFIALGGIGLPGAAVYVHTWFMTTARRTLVSLAGPTVNLALAMLLLAATRLLFDPIHAVLWAGVAFLAFLQLTALVLNLLPIPGLDGYAALEPHLRPETQRALAPAKQFALVFRLVLFLAPTLNGWFFGVVYWLFDLSGVSHRLAAAGSVLARFWSIWF.

2 consecutive transmembrane segments (helical) span residues 14–34 (PIFL…WLAG) and 39–59 (PLAY…SLCL). Zn(2+) is bound at residue H60. Residue E61 is part of the active site. H64 provides a ligand contact to Zn(2+). 4 helical membrane-spanning segments follow: residues 97 to 117 (GLPM…AVYV), 128 to 148 (TLVS…LLAA), 156 to 176 (IHAV…TALV), and 215 to 235 (LVLF…YWLF).

This sequence belongs to the peptidase M50B family. Zn(2+) serves as cofactor.

The protein resides in the cell membrane. The sequence is that of Putative zinc metalloprotease Rip2 (rip2) from Mycobacterium tuberculosis (strain ATCC 35801 / TMC 107 / Erdman).